We begin with the raw amino-acid sequence, 254 residues long: Type III pantothenate kinase 2 (254 aa).

6-13 contacts ATP; that stretch reads DMGNSHIH. 107 to 110 is a binding site for substrate; it reads GADR. The active-site Proton acceptor is the Asp109. Residue Asp130 coordinates K(+). Thr133 is a binding site for ATP. Thr185 serves as a coordination point for substrate.

This sequence belongs to the type III pantothenate kinase family. Homodimer. Requires NH4(+) as cofactor. It depends on K(+) as a cofactor.

It is found in the cytoplasm. The enzyme catalyses (R)-pantothenate + ATP = (R)-4'-phosphopantothenate + ADP + H(+). Its pathway is cofactor biosynthesis; coenzyme A biosynthesis; CoA from (R)-pantothenate: step 1/5. Catalyzes the phosphorylation of pantothenate (Pan), the first step in CoA biosynthesis. The protein is Type III pantothenate kinase 2 of Francisella tularensis subsp. holarctica (strain LVS).